Consider the following 456-residue polypeptide: MSKQTQCVHIENCNINYESIDIQLYDNENITIPNCYKCSSQDNILICLECGIVVCMEDCKLHSNHSIFKIFHGDDKTLWCNDCNELIKESTMIEKCTKNSDLINKKLKDIENLFKVMKLFIYYDQRNLKYNKNFDSIDNSIKDIIKNSNIIKNEIKIENEIEIENNKIKEFIKLIKNDKCKNIIVLTGAGISVASGIPDFRSVETGLYNNENVSKFKLPFKEAVFDIDYFKFNPEPFYQLSKDLYPSGKFKCTPVHYFIKLLSDKGLLLRNYAQNADTLERIAGIPLDKLIEAHGSFAVSRCTNCGLEYSQEYIKDSIFNNDPLKSVVPRCKVVQCNNAVIKPDIVFFGESLPPIFNQNILDDINRCDCLIVIGTSLKVQPIASMVHFFPHFKNIPRLLINNQIVGENSFGGFNFNNNKNFDFKMIGDCQESVLNLSKLLNWDTELLNLINSKNHN.

The region spanning 161–443 is the Deacetylase sirtuin-type domain; it reads IEIENNKIKE…LNLSKLLNWD (283 aa). Residue H294 is the Proton acceptor of the active site. 4 residues coordinate Zn(2+): C302, C305, C331, and C336.

The protein belongs to the sirtuin family. It depends on Zn(2+) as a cofactor.

The enzyme catalyses N(6)-acetyl-L-lysyl-[protein] + NAD(+) + H2O = 2''-O-acetyl-ADP-D-ribose + nicotinamide + L-lysyl-[protein]. NAD-dependent deacetylase, which plays an important role in the regulation of transcriptional repression. The protein is NAD-dependent deacetylase sir2C (sir2C) of Dictyostelium discoideum (Social amoeba).